The sequence spans 467 residues: Glycine--tRNA ligase (467 aa).

Substrate-binding residues include Arg-100 and Glu-175. ATP is bound by residues 207–209, 217–222, 291–292, and 335–338; these read RNE, FRTREF, EL, and GADR. Residue 222 to 226 coordinates substrate; that stretch reads FEQME. Residue 331–335 participates in substrate binding; the sequence is EPSLG.

This sequence belongs to the class-II aminoacyl-tRNA synthetase family. Homodimer.

It localises to the cytoplasm. It carries out the reaction tRNA(Gly) + glycine + ATP = glycyl-tRNA(Gly) + AMP + diphosphate. In terms of biological role, catalyzes the attachment of glycine to tRNA(Gly). The chain is Glycine--tRNA ligase from Clostridium perfringens (strain 13 / Type A).